The following is a 243-amino-acid chain: tRNA (cytidine/uridine-2'-O-)-methyltransferase TrmJ (243 aa).

S-adenosyl-L-methionine contacts are provided by residues 79 to 81, G114, I134, and 141 to 143; these read TSA and SSL.

It belongs to the class IV-like SAM-binding methyltransferase superfamily. RNA methyltransferase TrmH family. In terms of assembly, homodimer.

It is found in the cytoplasm. It carries out the reaction cytidine(32) in tRNA + S-adenosyl-L-methionine = 2'-O-methylcytidine(32) in tRNA + S-adenosyl-L-homocysteine + H(+). The enzyme catalyses uridine(32) in tRNA + S-adenosyl-L-methionine = 2'-O-methyluridine(32) in tRNA + S-adenosyl-L-homocysteine + H(+). Its function is as follows. Catalyzes the formation of 2'O-methylated cytidine (Cm32) or 2'O-methylated uridine (Um32) at position 32 in tRNA. This chain is tRNA (cytidine/uridine-2'-O-)-methyltransferase TrmJ (trmJ), found in Salmonella choleraesuis (strain SC-B67).